A 190-amino-acid chain; its full sequence is Adenylate kinase (190 aa).

12-17 lines the ATP pocket; that stretch reads GSGKTT. Residues 33–62 are NMP; it reads STGDLLRAEVASGSELGKTIDSFISKGNLV. AMP is bound by residues Thr34, Arg39, 60–62, 87–90, and Gln94; these read NLV and GYPR. Residues 129-135 are LID; it reads GRARGAD. Arg130 lines the ATP pocket. AMP-binding residues include Arg132 and Arg144. Arg172 contacts ATP.

The protein belongs to the adenylate kinase family. Monomer.

It localises to the cytoplasm. It carries out the reaction AMP + ATP = 2 ADP. It functions in the pathway purine metabolism; AMP biosynthesis via salvage pathway; AMP from ADP: step 1/1. Catalyzes the reversible transfer of the terminal phosphate group between ATP and AMP. Plays an important role in cellular energy homeostasis and in adenine nucleotide metabolism. The sequence is that of Adenylate kinase from Campylobacter lari (strain RM2100 / D67 / ATCC BAA-1060).